The following is a 236-amino-acid chain: CHD1 helical C-terminal domain containing protein 1 (236 aa).

The segment at 1–29 (MEASDWQGGEGDKPLEKVGSVPCLERSSS) is disordered. The CHD1 helical C-terminal domain (CHCT) stretch occupies residues 44-145 (LSQDTFKICK…TNQTAKFLAA (102 aa)). The disordered stretch occupies residues 197 to 236 (LEEPRSSHCSRGDSLRKLPQKPKLKKKRIKERLESPKSCS). The span at 198-212 (EEPRSSHCSRGDSLR) shows a compositional bias: basic and acidic residues. A compositionally biased stretch (basic residues) spans 214-226 (LPQKPKLKKKRIK). Basic and acidic residues predominate over residues 227-236 (ERLESPKSCS).

As to expression, exclusively expressed in testes.

The protein localises to the cytoplasm. It is found in the nucleus. In terms of biological role, may play a role in regulation of apoptosis. The sequence is that of CHD1 helical C-terminal domain containing protein 1 (Chct1) from Mus musculus (Mouse).